Here is a 124-residue protein sequence, read N- to C-terminus: MAITKDDILEAVSAMSVMELNDLVKAFEDKFGVSAAAVAVAGPAGGAAAPAAEEKTEFDVILKGAGANKVGVIKAVREITGLGLKEAKDLVDGAPKTVKEAMPKADADAAAKKLIEAGAEVEVK.

It belongs to the bacterial ribosomal protein bL12 family. In terms of assembly, homodimer. Part of the ribosomal stalk of the 50S ribosomal subunit. Forms a multimeric L10(L12)X complex, where L10 forms an elongated spine to which 2 to 4 L12 dimers bind in a sequential fashion. Binds GTP-bound translation factors.

Functionally, forms part of the ribosomal stalk which helps the ribosome interact with GTP-bound translation factors. Is thus essential for accurate translation. In Ralstonia nicotianae (strain ATCC BAA-1114 / GMI1000) (Ralstonia solanacearum), this protein is Large ribosomal subunit protein bL12.